The chain runs to 180 residues: Large ribosomal subunit protein uL5 (180 aa).

The protein belongs to the universal ribosomal protein uL5 family. Part of the 50S ribosomal subunit; part of the 5S rRNA/L5/L18/L25 subcomplex. Contacts the 5S rRNA and the P site tRNA. Forms a bridge to the 30S subunit in the 70S ribosome.

Functionally, this is one of the proteins that bind and probably mediate the attachment of the 5S RNA into the large ribosomal subunit, where it forms part of the central protuberance. In the 70S ribosome it contacts protein S13 of the 30S subunit (bridge B1b), connecting the 2 subunits; this bridge is implicated in subunit movement. Contacts the P site tRNA; the 5S rRNA and some of its associated proteins might help stabilize positioning of ribosome-bound tRNAs. The chain is Large ribosomal subunit protein uL5 from Xanthomonas euvesicatoria pv. vesicatoria (strain 85-10) (Xanthomonas campestris pv. vesicatoria).